The primary structure comprises 102 residues: NADH-quinone oxidoreductase subunit K 1 (102 aa).

3 helical membrane passes run 5–25, 31–51, and 65–85; these read LSHY…GIFL, IVIL…MVAF, and LFIL…LVVF.

The protein belongs to the complex I subunit 4L family. NDH-1 is composed of 14 different subunits. Subunits NuoA, H, J, K, L, M, N constitute the membrane sector of the complex.

It is found in the cell inner membrane. The catalysed reaction is a quinone + NADH + 5 H(+)(in) = a quinol + NAD(+) + 4 H(+)(out). NDH-1 shuttles electrons from NADH, via FMN and iron-sulfur (Fe-S) centers, to quinones in the respiratory chain. The immediate electron acceptor for the enzyme in this species is believed to be ubiquinone. Couples the redox reaction to proton translocation (for every two electrons transferred, four hydrogen ions are translocated across the cytoplasmic membrane), and thus conserves the redox energy in a proton gradient. This is NADH-quinone oxidoreductase subunit K 1 from Rhizobium etli (strain ATCC 51251 / DSM 11541 / JCM 21823 / NBRC 15573 / CFN 42).